Consider the following 373-residue polypeptide: Glutamate 5-kinase (373 aa).

ATP is bound at residue lysine 12. Residues serine 52, aspartate 139, and asparagine 154 each contribute to the substrate site. 216–222 provides a ligand contact to ATP; it reads TGGMVTK. Residues 281–359 enclose the PUA domain; it reads RGNICIDDGA…DEINTVLAGN (79 aa).

Belongs to the glutamate 5-kinase family.

It is found in the cytoplasm. The catalysed reaction is L-glutamate + ATP = L-glutamyl 5-phosphate + ADP. The protein operates within amino-acid biosynthesis; L-proline biosynthesis; L-glutamate 5-semialdehyde from L-glutamate: step 1/2. Functionally, catalyzes the transfer of a phosphate group to glutamate to form L-glutamate 5-phosphate. This chain is Glutamate 5-kinase, found in Dehalococcoides mccartyi (strain ATCC BAA-2266 / KCTC 15142 / 195) (Dehalococcoides ethenogenes (strain 195)).